Reading from the N-terminus, the 393-residue chain is Argininosuccinate synthase (393 aa).

ATP is bound by residues 7-15 (AYSGGLDTS) and Ala34. Residues Tyr85 and Ser90 each contribute to the L-citrulline site. Position 115 (Gly115) interacts with ATP. 3 residues coordinate L-aspartate: Thr117, Asn121, and Asp122. Asn121 serves as a coordination point for L-citrulline. L-citrulline is bound by residues Arg125, Ser176, Ser185, Glu261, and Tyr273.

Belongs to the argininosuccinate synthase family. Type 1 subfamily. As to quaternary structure, homotetramer.

Its subcellular location is the cytoplasm. It catalyses the reaction L-citrulline + L-aspartate + ATP = 2-(N(omega)-L-arginino)succinate + AMP + diphosphate + H(+). It participates in amino-acid biosynthesis; L-arginine biosynthesis; L-arginine from L-ornithine and carbamoyl phosphate: step 2/3. This Ehrlichia chaffeensis (strain ATCC CRL-10679 / Arkansas) protein is Argininosuccinate synthase.